A 246-amino-acid chain; its full sequence is tRNA (guanine-N(1)-)-methyltransferase (246 aa).

Residues Gly-112 and 131 to 136 (IGDYVL) contribute to the S-adenosyl-L-methionine site.

The protein belongs to the RNA methyltransferase TrmD family. As to quaternary structure, homodimer.

It is found in the cytoplasm. The enzyme catalyses guanosine(37) in tRNA + S-adenosyl-L-methionine = N(1)-methylguanosine(37) in tRNA + S-adenosyl-L-homocysteine + H(+). Its function is as follows. Specifically methylates guanosine-37 in various tRNAs. The protein is tRNA (guanine-N(1)-)-methyltransferase of Thermosipho africanus (strain TCF52B).